The primary structure comprises 504 residues: MVEQQQQEEDIWGQILRESSNKNNYFEKRDVAILGDPTSGKSLLLSKFDTVSNVESLKSIALSYTFSDIYEDDTSEDPVGRINYWSLEGEASQNDLLKFSLNKENIKNCMVIITLDFSQPWNLVESLKKWLGILEEHIKSIFKDDKNGFKNLQDKLSIKWHEYEEPTTTAATTTTTTTSNNIENNTNKTSPTTDKIQTNNVQKKKKKKVNISSAEDASVLPPLSENILINNLGVPILVACCKSDSVVMLEKDFDYKDELFDYIQQYLRRICLQYGAGLIYTSARKEINCGVTLEYIENILFGFELKSKTQLIEKDQIFVPAGWDTLAKIQVDFENQKVCKDTDEPYENIVKKPSIIKRREQTQTNSIICDDDQDFLGKIKSQLDNDDQSSINSPSTPSPLSQSSNNNNSNNNINNTSTPSINTPLQPTDKPLSDIKSSNNPVAASPSAERAALANFFTSLISKDKTSSRKDLKSSLASPPTTSVSSNAREDAKKELDKLKQQKK.

35–42 (GDPTSGKS) provides a ligand contact to ATP. Low complexity-rich tracts occupy residues 167-189 (TTTA…TNKT), 392-425 (NSPS…NTPL), and 437-446 (SSNNPVAASP). 3 disordered regions span residues 167 to 195 (TTTA…TTDK), 383 to 446 (LDND…AASP), and 464 to 504 (DKTS…QQKK). Residues 464 to 473 (DKTSSRKDLK) are compositionally biased toward basic and acidic residues. A compositionally biased stretch (polar residues) spans 475-487 (SLASPPTTSVSSN). The span at 488-504 (AREDAKKELDKLKQQKK) shows a compositional bias: basic and acidic residues.

This sequence belongs to the dynein light intermediate chain family. Homodimer. The cytoplasmic dynein 1 complex consists of two catalytic heavy chains (HCs) and a number of non-catalytic subunits presented by intermediate chains (ICs), light intermediate chains (LICs) and light chains (LCs).

The protein localises to the cytoplasm. Its subcellular location is the cytoskeleton. Its function is as follows. Acts as one of several non-catalytic accessory components of the cytoplasmic dynein 1 complex that are thought to be involved in linking dynein to cargos and to adapter proteins that regulate dynein function. Cytoplasmic dynein 1 acts as a motor for the intracellular retrograde motility of vesicles and organelles along microtubules. May play a role in binding dynein to membranous organelles or chromosomes. This Dictyostelium discoideum (Social amoeba) protein is Cytoplasmic dynein 1 light intermediate chain 1 (dync1li1).